The primary structure comprises 304 residues: Aspartate carbamoyltransferase catalytic subunit (304 aa).

Residues R49 and T50 each contribute to the carbamoyl phosphate site. K77 contributes to the L-aspartate binding site. Carbamoyl phosphate contacts are provided by R99, H127, and Q130. Residues R160 and R211 each coordinate L-aspartate. Carbamoyl phosphate is bound by residues A252 and P253.

Belongs to the aspartate/ornithine carbamoyltransferase superfamily. ATCase family. As to quaternary structure, heterododecamer (2C3:3R2) of six catalytic PyrB chains organized as two trimers (C3), and six regulatory PyrI chains organized as three dimers (R2).

The enzyme catalyses carbamoyl phosphate + L-aspartate = N-carbamoyl-L-aspartate + phosphate + H(+). The protein operates within pyrimidine metabolism; UMP biosynthesis via de novo pathway; (S)-dihydroorotate from bicarbonate: step 2/3. Its function is as follows. Catalyzes the condensation of carbamoyl phosphate and aspartate to form carbamoyl aspartate and inorganic phosphate, the committed step in the de novo pyrimidine nucleotide biosynthesis pathway. The protein is Aspartate carbamoyltransferase catalytic subunit of Bacillus cereus (strain ZK / E33L).